Consider the following 1016-residue polypeptide: Nonsense-mediated mRNA decay factor SMG5 (1016 aa).

The residue at position 2 (Ser2) is an N-acetylserine. Phosphoserine occurs at positions 2 and 423. Disordered regions lie at residues 408-561 (NPVP…PSEA) and 594-637 (PTTN…RSCR). Residues 449 to 466 (KSRKFSRLSCLRRRRHPP) are compositionally biased toward basic residues. Residues 594–603 (PTTNPHTSAS) are compositionally biased toward polar residues. Residues 619 to 628 (ASEEGSESEG) show a composition bias toward acidic residues. Positions 798-841 (QSEQESLLQQAQAQFRMAQEEARRNRLMRDMAQLRLQLEVSQLE) form a coiled coil. The PINc domain maps to 872 to 995 (RQLATSGRFI…GPMQAALQAA (124 aa)).

Interacts with TERT, PPP2CA and SMG1. Part of a complex that contains SMG1, SMG5, SMG7, PPP2CA, a short isoform of UPF3A (isoform UPF3AS, but not isoform UPF3AL) and phosphorylated UPF1. Not detected in complexes that contain unphosphorylated UPF1. In terms of tissue distribution, ubiquitous.

The protein resides in the cytoplasm. It localises to the nucleus. Its function is as follows. Plays a role in nonsense-mediated mRNA decay. Does not have RNase activity by itself. Promotes dephosphorylation of UPF1. Together with SMG7 is thought to provide a link to the mRNA degradation machinery involving exonucleolytic pathways, and to serve as an adapter for UPF1 to protein phosphatase 2A (PP2A), thereby triggering UPF1 dephosphorylation. Necessary for TERT activity. The polypeptide is Nonsense-mediated mRNA decay factor SMG5 (Homo sapiens (Human)).